Consider the following 150-residue polypeptide: SsrA-binding protein (150 aa).

Belongs to the SmpB family.

It is found in the cytoplasm. Functionally, required for rescue of stalled ribosomes mediated by trans-translation. Binds to transfer-messenger RNA (tmRNA), required for stable association of tmRNA with ribosomes. tmRNA and SmpB together mimic tRNA shape, replacing the anticodon stem-loop with SmpB. tmRNA is encoded by the ssrA gene; the 2 termini fold to resemble tRNA(Ala) and it encodes a 'tag peptide', a short internal open reading frame. During trans-translation Ala-aminoacylated tmRNA acts like a tRNA, entering the A-site of stalled ribosomes, displacing the stalled mRNA. The ribosome then switches to translate the ORF on the tmRNA; the nascent peptide is terminated with the 'tag peptide' encoded by the tmRNA and targeted for degradation. The ribosome is freed to recommence translation, which seems to be the essential function of trans-translation. This is SsrA-binding protein from Polynucleobacter asymbioticus (strain DSM 18221 / CIP 109841 / QLW-P1DMWA-1) (Polynucleobacter necessarius subsp. asymbioticus).